Consider the following 542-residue polypeptide: Chaperonin GroEL (542 aa).

ATP-binding positions include 30-33 (TLGP), K51, 87-91 (DGTTT), G415, 480-482 (NAA), and D496.

This sequence belongs to the chaperonin (HSP60) family. In terms of assembly, forms a cylinder of 14 subunits composed of two heptameric rings stacked back-to-back. Interacts with the co-chaperonin GroES.

The protein localises to the cytoplasm. The catalysed reaction is ATP + H2O + a folded polypeptide = ADP + phosphate + an unfolded polypeptide.. In terms of biological role, together with its co-chaperonin GroES, plays an essential role in assisting protein folding. The GroEL-GroES system forms a nano-cage that allows encapsulation of the non-native substrate proteins and provides a physical environment optimized to promote and accelerate protein folding. The polypeptide is Chaperonin GroEL (Tremblaya princeps).